The following is a 26-amino-acid chain: uncharacterized protein (26 aa).

Its subcellular location is the plastid. The protein localises to the chloroplast. This is an uncharacterized protein from Trieres chinensis (Marine centric diatom).